A 297-amino-acid chain; its full sequence is Transcription factor MYB1R1 (297 aa).

The tract at residues 44–96 (DLSQYEHPNANNNNNGGDNNESSKVAQDEGYASADDAVQHQSNSGRERKRGVP) is disordered. Residues 52 to 63 (NANNNNNGGDNN) are compositionally biased toward low complexity. An HTH myb-type domain is found at 89 to 145 (RERKRGVPWTEEEHKLFLLGLQKVGKGDWRGISRNFVKTRTPTQVASHAQKYFLRRS). The segment at residues 117-141 (WRGISRNFVKTRTPTQVASHAQKYF) is a DNA-binding region (H-T-H motif).

Its subcellular location is the nucleus. The protein localises to the cytoplasm. It is found in the cytosol. Its function is as follows. Binds selectively to the DNA sequence 5'-[GA]GATAA-3' and may act as a transcription factor involved in the regulation of drought-responsive genes. Enhances stomatal closure in response to abscisic acid (ABA). Confers drought and salt tolerance. The chain is Transcription factor MYB1R1 from Solanum tuberosum (Potato).